The primary structure comprises 548 residues: Phenylalanine--tRNA ligase beta subunit (548 aa).

The region spanning 275–350 is the B5 domain; that stretch reads LKEDVLETTS…IAYGYNKFSG (76 aa). Residues Asp-328, Asp-334, Glu-337, and Glu-338 each contribute to the Mg(2+) site.

This sequence belongs to the phenylalanyl-tRNA synthetase beta subunit family. Type 2 subfamily. As to quaternary structure, tetramer of two alpha and two beta subunits. The cofactor is Mg(2+).

It is found in the cytoplasm. It carries out the reaction tRNA(Phe) + L-phenylalanine + ATP = L-phenylalanyl-tRNA(Phe) + AMP + diphosphate + H(+). The polypeptide is Phenylalanine--tRNA ligase beta subunit (Methanocaldococcus jannaschii (strain ATCC 43067 / DSM 2661 / JAL-1 / JCM 10045 / NBRC 100440) (Methanococcus jannaschii)).